The following is a 477-amino-acid chain: Adenosylhomocysteinase (477 aa).

Thr63, Asp142, and Glu202 together coordinate substrate. Residue 203 to 205 (TTT) participates in NAD(+) binding. Substrate is bound by residues Lys232 and Asp236. Residues Asn237, 266-271 (GYGDVG), Glu289, Asn324, 345-347 (IGH), and Asn390 each bind NAD(+).

The protein belongs to the adenosylhomocysteinase family. It depends on NAD(+) as a cofactor.

It localises to the cytoplasm. It catalyses the reaction S-adenosyl-L-homocysteine + H2O = L-homocysteine + adenosine. It functions in the pathway amino-acid biosynthesis; L-homocysteine biosynthesis; L-homocysteine from S-adenosyl-L-homocysteine: step 1/1. Its function is as follows. May play a key role in the regulation of the intracellular concentration of adenosylhomocysteine. In Methylibium petroleiphilum (strain ATCC BAA-1232 / LMG 22953 / PM1), this protein is Adenosylhomocysteinase.